Reading from the N-terminus, the 478-residue chain is Proline--tRNA ligase (478 aa).

It belongs to the class-II aminoacyl-tRNA synthetase family. ProS type 3 subfamily. As to quaternary structure, homodimer.

It is found in the cytoplasm. It carries out the reaction tRNA(Pro) + L-proline + ATP = L-prolyl-tRNA(Pro) + AMP + diphosphate. In terms of biological role, catalyzes the attachment of proline to tRNA(Pro) in a two-step reaction: proline is first activated by ATP to form Pro-AMP and then transferred to the acceptor end of tRNA(Pro). This chain is Proline--tRNA ligase, found in Methanococcoides burtonii (strain DSM 6242 / NBRC 107633 / OCM 468 / ACE-M).